The chain runs to 1114 residues: TBC1 domain family member 8B (1114 aa).

GRAM domains follow at residues 145–212 and 285–353; these read LKFE…EKTS and EQFK…DKTD. Over residues 399–411 the composition is skewed to polar residues; the sequence is TEVAVSSDSTGPS. Positions 399–420 are disordered; that stretch reads TEVAVSSDSTGPSENFEEQPLT. Residues 486 to 673 form the Rab-GAP TBC domain; that stretch reads GIPETLRGEL…NVVDCFFYDG (188 aa). The EF-hand domain maps to 857 to 892; that stretch reads NRDSLALWTFRLLDENSDCLINFKEFSSAIDIMYNG. Disordered stretches follow at residues 938-957 and 1032-1061; these read SKPA…EKGK and LHSP…KDLP. The segment covering 940–957 has biased composition (basic and acidic residues); sequence PADEKETESGRNSPEKGK.

In terms of assembly, interacts (via domain Rab-GAP TBC) with RAB11B (in GTP-bound form).

It localises to the cytoplasm. The protein resides in the cytosol. Involved in vesicular recycling, probably as a RAB11B GTPase-activating protein. The chain is TBC1 domain family member 8B (Tbc1d8b) from Mus musculus (Mouse).